The primary structure comprises 280 residues: UDP-3-O-acyl-N-acetylglucosamine deacetylase (280 aa).

Residues H77, H238, and D242 each contribute to the Zn(2+) site. H265 serves as the catalytic Proton donor.

The protein belongs to the LpxC family. Requires Zn(2+) as cofactor.

The catalysed reaction is a UDP-3-O-[(3R)-3-hydroxyacyl]-N-acetyl-alpha-D-glucosamine + H2O = a UDP-3-O-[(3R)-3-hydroxyacyl]-alpha-D-glucosamine + acetate. The protein operates within glycolipid biosynthesis; lipid IV(A) biosynthesis; lipid IV(A) from (3R)-3-hydroxytetradecanoyl-[acyl-carrier-protein] and UDP-N-acetyl-alpha-D-glucosamine: step 2/6. Functionally, catalyzes the hydrolysis of UDP-3-O-myristoyl-N-acetylglucosamine to form UDP-3-O-myristoylglucosamine and acetate, the committed step in lipid A biosynthesis. The polypeptide is UDP-3-O-acyl-N-acetylglucosamine deacetylase (Nostoc sp. (strain PCC 7120 / SAG 25.82 / UTEX 2576)).